A 535-amino-acid polypeptide reads, in one-letter code: Doublesex- and mab-3-related transcription factor A2 (535 aa).

A DNA-binding region (DM) is located at residues 69-116; sequence CARCRNHGVVSALKGHKRYCRWKDCLCAKCTLIAERQRVMAAQVALRR. Residues 200–315 form a disordered region; that stretch reads LQAGRPGSPQ…GGPGPRQRTP (116 aa). Residues 313–348 form the DMA domain; that stretch reads RTPLDILTRVFPGHRRGVLELVLQGCGGDVVQAIEQ.

Belongs to the DMRT family.

It is found in the nucleus. Functionally, may be involved in sexual development. This chain is Doublesex- and mab-3-related transcription factor A2 (DMRTA2), found in Bos taurus (Bovine).